The chain runs to 121 residues: MARYRLGRINEEVKKEISNIIRDDIHDPRLTGMVSVTRVEVTNDLRYAKVFISIFGSDESKTETLEALKSSAGFIRREVGHRVKLRYTPEILLELDESIEHGMHINDLLSNLKEKKRNDNR.

It belongs to the RbfA family. As to quaternary structure, monomer. Binds 30S ribosomal subunits, but not 50S ribosomal subunits or 70S ribosomes.

It is found in the cytoplasm. Its function is as follows. One of several proteins that assist in the late maturation steps of the functional core of the 30S ribosomal subunit. Associates with free 30S ribosomal subunits (but not with 30S subunits that are part of 70S ribosomes or polysomes). Required for efficient processing of 16S rRNA. May interact with the 5'-terminal helix region of 16S rRNA. The sequence is that of Ribosome-binding factor A from Clostridium novyi (strain NT).